Consider the following 194-residue polypeptide: Xanthine phosphoribosyltransferase (194 aa).

Leu-20 and Asn-27 together coordinate xanthine. 128-132 is a binding site for 5-phospho-alpha-D-ribose 1-diphosphate; sequence ANGQA. Position 156 (Lys-156) interacts with xanthine.

The protein belongs to the purine/pyrimidine phosphoribosyltransferase family. Xpt subfamily. As to quaternary structure, homodimer.

It localises to the cytoplasm. It carries out the reaction XMP + diphosphate = xanthine + 5-phospho-alpha-D-ribose 1-diphosphate. Its pathway is purine metabolism; XMP biosynthesis via salvage pathway; XMP from xanthine: step 1/1. Converts the preformed base xanthine, a product of nucleic acid breakdown, to xanthosine 5'-monophosphate (XMP), so it can be reused for RNA or DNA synthesis. This is Xanthine phosphoribosyltransferase from Bacillus licheniformis (strain ATCC 14580 / DSM 13 / JCM 2505 / CCUG 7422 / NBRC 12200 / NCIMB 9375 / NCTC 10341 / NRRL NRS-1264 / Gibson 46).